Reading from the N-terminus, the 888-residue chain is Alanine--tRNA ligase (888 aa).

Residues His-573, His-577, Cys-676, and His-680 each coordinate Zn(2+).

Belongs to the class-II aminoacyl-tRNA synthetase family. Zn(2+) serves as cofactor.

It localises to the cytoplasm. The enzyme catalyses tRNA(Ala) + L-alanine + ATP = L-alanyl-tRNA(Ala) + AMP + diphosphate. Functionally, catalyzes the attachment of alanine to tRNA(Ala) in a two-step reaction: alanine is first activated by ATP to form Ala-AMP and then transferred to the acceptor end of tRNA(Ala). Also edits incorrectly charged Ser-tRNA(Ala) and Gly-tRNA(Ala) via its editing domain. The chain is Alanine--tRNA ligase from Corynebacterium diphtheriae (strain ATCC 700971 / NCTC 13129 / Biotype gravis).